A 214-amino-acid chain; its full sequence is Large ribosomal subunit protein uL16 (214 aa).

Arginine 32 is subject to Citrulline. Lysine 175 participates in a covalent cross-link: Glycyl lysine isopeptide (Lys-Gly) (interchain with G-Cter in SUMO2). A Glycyl lysine isopeptide (Lys-Gly) (interchain with G-Cter in ubiquitin) cross-link involves residue lysine 188.

Belongs to the universal ribosomal protein uL16 family. Component of the large ribosomal subunit. Mature ribosomes consist of a small (40S) and a large (60S) subunit. The 40S subunit contains about 33 different proteins and 1 molecule of RNA (18S). The 60S subunit contains about 49 different proteins and 3 molecules of RNA (28S, 5.8S and 5S). In terms of processing, citrullinated by PADI4. Ufmylated by UFL1.

It localises to the cytoplasm. Its function is as follows. Component of the large ribosomal subunit. Plays a role in the formation of actively translating ribosomes. May play a role in the embryonic brain development. The sequence is that of Large ribosomal subunit protein uL16 from Bos taurus (Bovine).